Here is a 293-residue protein sequence, read N- to C-terminus: Phosphatidylserine decarboxylase proenzyme (293 aa).

Residues aspartate 88, histidine 144, and serine 247 each act as charge relay system; for autoendoproteolytic cleavage activity in the active site. Serine 247 functions as the Schiff-base intermediate with substrate; via pyruvic acid; for decarboxylase activity in the catalytic mechanism. Serine 247 carries the pyruvic acid (Ser); by autocatalysis modification.

The protein belongs to the phosphatidylserine decarboxylase family. PSD-B subfamily. Prokaryotic type I sub-subfamily. In terms of assembly, heterodimer of a large membrane-associated beta subunit and a small pyruvoyl-containing alpha subunit. Requires pyruvate as cofactor. Post-translationally, is synthesized initially as an inactive proenzyme. Formation of the active enzyme involves a self-maturation process in which the active site pyruvoyl group is generated from an internal serine residue via an autocatalytic post-translational modification. Two non-identical subunits are generated from the proenzyme in this reaction, and the pyruvate is formed at the N-terminus of the alpha chain, which is derived from the carboxyl end of the proenzyme. The autoendoproteolytic cleavage occurs by a canonical serine protease mechanism, in which the side chain hydroxyl group of the serine supplies its oxygen atom to form the C-terminus of the beta chain, while the remainder of the serine residue undergoes an oxidative deamination to produce ammonia and the pyruvoyl prosthetic group on the alpha chain. During this reaction, the Ser that is part of the protease active site of the proenzyme becomes the pyruvoyl prosthetic group, which constitutes an essential element of the active site of the mature decarboxylase.

Its subcellular location is the cell membrane. It catalyses the reaction a 1,2-diacyl-sn-glycero-3-phospho-L-serine + H(+) = a 1,2-diacyl-sn-glycero-3-phosphoethanolamine + CO2. The protein operates within phospholipid metabolism; phosphatidylethanolamine biosynthesis; phosphatidylethanolamine from CDP-diacylglycerol: step 2/2. Catalyzes the formation of phosphatidylethanolamine (PtdEtn) from phosphatidylserine (PtdSer). The chain is Phosphatidylserine decarboxylase proenzyme from Xylella fastidiosa (strain 9a5c).